The chain runs to 561 residues: Asparagine synthetase [glutamine-hydrolyzing] (561 aa).

The For GATase activity role is filled by C2. A Glutamine amidotransferase type-2 domain is found at 2 to 191 (CGIWALFGSD…PGHYEVLDLK (190 aa)). Residues 49–53 (RLAVV), 75–77 (NGE), and D97 contribute to the L-glutamine site. Positions 213–536 (HALYDSVEKL…PGRADWLTHY (324 aa)) constitute an Asparagine synthetase domain. Residues L256, I288, and 363-364 (SG) each bind ATP. The residue at position 385 (K385) is an N6-acetyllysine. T545 bears the Phosphothreonine mark. S557 is modified (phosphoserine).

It carries out the reaction L-aspartate + L-glutamine + ATP + H2O = L-asparagine + L-glutamate + AMP + diphosphate + H(+). Its pathway is amino-acid biosynthesis; L-asparagine biosynthesis; L-asparagine from L-aspartate (L-Gln route): step 1/1. This Mesocricetus auratus (Golden hamster) protein is Asparagine synthetase [glutamine-hydrolyzing] (ASNS).